A 60-amino-acid polypeptide reads, in one-letter code: Large ribosomal subunit protein bL33 (60 aa).

This sequence belongs to the bacterial ribosomal protein bL33 family.

The chain is Large ribosomal subunit protein bL33 from Flavobacterium psychrophilum (strain ATCC 49511 / DSM 21280 / CIP 103535 / JIP02/86).